Reading from the N-terminus, the 507-residue chain is ESX-5 secretion system ATPase EccB5 (507 aa).

Residues 56–76 (VVASVSAALVICLGSLLWSFI) form a helical membrane-spanning segment.

The protein belongs to the EccB family. In terms of assembly, part of the ESX-5 / type VII secretion system (T7SS), which is composed of cytosolic and membrane components. The ESX-5 membrane complex is composed of EccB5, EccC5, EccD5 and EccE5.

Its subcellular location is the cell inner membrane. Its function is as follows. An ATPase. Part of the ESX-5 specialized secretion system, which is responsible for the secretion of EsxN and a number of PE_PGRS and PPE proteins. This chain is ESX-5 secretion system ATPase EccB5, found in Mycobacterium marinum (strain ATCC BAA-535 / M).